A 446-amino-acid polypeptide reads, in one-letter code: Probable glycine dehydrogenase (decarboxylating) subunit 1 (446 aa).

Belongs to the GcvP family. N-terminal subunit subfamily. As to quaternary structure, the glycine cleavage system is composed of four proteins: P, T, L and H. In this organism, the P 'protein' is a heterodimer of two subunits.

It catalyses the reaction N(6)-[(R)-lipoyl]-L-lysyl-[glycine-cleavage complex H protein] + glycine + H(+) = N(6)-[(R)-S(8)-aminomethyldihydrolipoyl]-L-lysyl-[glycine-cleavage complex H protein] + CO2. The glycine cleavage system catalyzes the degradation of glycine. The P protein binds the alpha-amino group of glycine through its pyridoxal phosphate cofactor; CO(2) is released and the remaining methylamine moiety is then transferred to the lipoamide cofactor of the H protein. This Desulfitobacterium hafniense (strain DSM 10664 / DCB-2) protein is Probable glycine dehydrogenase (decarboxylating) subunit 1.